A 382-amino-acid polypeptide reads, in one-letter code: 1-deoxy-D-xylulose 5-phosphate reductoisomerase (382 aa).

6 residues coordinate NADPH: Thr10, Gly11, Ser12, Ile13, Asn38, and Asn120. A 1-deoxy-D-xylulose 5-phosphate-binding site is contributed by Lys121. NADPH is bound at residue Glu122. A Mn(2+)-binding site is contributed by Asp146. The 1-deoxy-D-xylulose 5-phosphate site is built by Ser147, Glu148, Ser172, and His195. Residue Glu148 coordinates Mn(2+). Gly201 is a binding site for NADPH. 1-deoxy-D-xylulose 5-phosphate contacts are provided by Ser208, Asn213, Lys214, and Glu217. Residue Glu217 coordinates Mn(2+).

The protein belongs to the DXR family. The cofactor is Mg(2+). Mn(2+) serves as cofactor.

The enzyme catalyses 2-C-methyl-D-erythritol 4-phosphate + NADP(+) = 1-deoxy-D-xylulose 5-phosphate + NADPH + H(+). The protein operates within isoprenoid biosynthesis; isopentenyl diphosphate biosynthesis via DXP pathway; isopentenyl diphosphate from 1-deoxy-D-xylulose 5-phosphate: step 1/6. Catalyzes the NADPH-dependent rearrangement and reduction of 1-deoxy-D-xylulose-5-phosphate (DXP) to 2-C-methyl-D-erythritol 4-phosphate (MEP). This is 1-deoxy-D-xylulose 5-phosphate reductoisomerase from Thermoanaerobacter pseudethanolicus (strain ATCC 33223 / 39E) (Clostridium thermohydrosulfuricum).